Here is a 202-residue protein sequence, read N- to C-terminus: NADH-quinone oxidoreductase subunit C (202 aa).

The protein belongs to the complex I 30 kDa subunit family. In terms of assembly, NDH-1 is composed of 14 different subunits. Subunits NuoB, C, D, E, F, and G constitute the peripheral sector of the complex.

It localises to the cell inner membrane. It catalyses the reaction a quinone + NADH + 5 H(+)(in) = a quinol + NAD(+) + 4 H(+)(out). In terms of biological role, NDH-1 shuttles electrons from NADH, via FMN and iron-sulfur (Fe-S) centers, to quinones in the respiratory chain. The immediate electron acceptor for the enzyme in this species is believed to be ubiquinone. Couples the redox reaction to proton translocation (for every two electrons transferred, four hydrogen ions are translocated across the cytoplasmic membrane), and thus conserves the redox energy in a proton gradient. This Brucella abortus (strain 2308) protein is NADH-quinone oxidoreductase subunit C.